The following is a 171-amino-acid chain: Orange carotenoid-binding domain-containing protein (171 aa).

The region spanning 21–171 (GDAVASTITV…ADMGVDPLAD (151 aa)) is the OCP N-terminal domain.

Belongs to the orange carotenoid-binding protein family. 3'-hydroxyechinenone serves as cofactor.

The protein localises to the cellular thylakoid membrane. Its function is as follows. Might act as a photo-protectant, protecting against damage induced by excess light via a process known as non-photochemical quenching (NPQ). This Nostoc sp. (strain PCC 7120 / SAG 25.82 / UTEX 2576) protein is Orange carotenoid-binding domain-containing protein.